The primary structure comprises 89 residues: Sec translocon accessory complex subunit YrbF (89 aa).

A helical transmembrane segment spans residues 4-24 (GTLGTLVPIILMFAVLYFLLI).

This sequence belongs to the YajC family. In terms of assembly, part of the SecDF-YidC-YajC translocase complex. The SecDF-YidC-YajC translocase forms a supercomplex with SecYEG, called the holo-translocon (HTL).

Its subcellular location is the cell membrane. Functionally, the SecYEG-SecDF-YajC-YidC holo-translocon (HTL) protein secretase/insertase is a supercomplex required for protein secretion, insertion of proteins into membranes, and assembly of membrane protein complexes. While the SecYEG complex is essential for assembly of a number of proteins and complexes, the SecDF-YajC-YidC subcomplex facilitates these functions. This chain is Sec translocon accessory complex subunit YrbF (yrbF), found in Bacillus subtilis (strain 168).